We begin with the raw amino-acid sequence, 254 residues long: Indole-3-glycerol phosphate synthase (254 aa).

This sequence belongs to the TrpC family.

The enzyme catalyses 1-(2-carboxyphenylamino)-1-deoxy-D-ribulose 5-phosphate + H(+) = (1S,2R)-1-C-(indol-3-yl)glycerol 3-phosphate + CO2 + H2O. The protein operates within amino-acid biosynthesis; L-tryptophan biosynthesis; L-tryptophan from chorismate: step 4/5. The protein is Indole-3-glycerol phosphate synthase of Methanopyrus kandleri (strain AV19 / DSM 6324 / JCM 9639 / NBRC 100938).